The primary structure comprises 1852 residues: Voltage-dependent L-type calcium channel subunit alpha-1S (1852 aa).

The disordered stretch occupies residues 1–23 (MEPPSPQDEGLRKKQPKKPVPEI). The Cytoplasmic portion of the chain corresponds to 1-51 (MEPPSPQDEGLRKKQPKKPVPEILPRPPRALFCLTLQNPLRKACISIVEWK). Residues 38-337 (NPLRKACISI…LVLGVLSGEF (300 aa)) form an I repeat. The chain crosses the membrane as a helical span at residues 52-70 (PFETIILLTIFANCVALAV). The Extracellular segment spans residues 71–85 (YLPMPEDDNNTLNLG). N-linked (GlcNAc...) asparagine glycosylation occurs at Asn-79. Residues 86–106 (LEKLEYFFLIVFSIEAAMKII) form a helical membrane-spanning segment. Over 107-115 (AYGFLFHQD) the chain is Cytoplasmic. Residues 116–136 (AYLRSGWNVLDFIIVFLGVFT) form a helical membrane-spanning segment. Residues 137 to 160 (VILEQVNIIQTNTAPMSSKGAGLD) are Extracellular-facing. The chain crosses the membrane as a helical span at residues 161–179 (VKALRAFRVLRPLRLVSGV). Residues 180–196 (PSLQVVLNSIFKAMLPL) are Cytoplasmic-facing. A helical membrane pass occupies residues 197 to 218 (FHIALLVLFMVIIYAIIGLELF). The Extracellular segment spans residues 219 to 279 (KGKMHKTCYF…HGITHFDNFG (61 aa)). 2 disulfides stabilise this stretch: Cys-226/Cys-254 and Cys-245/Cys-261. Residue Asn-257 is glycosylated (N-linked (GlcNAc...) asparagine). An intramembrane region (pore-forming) is located at residues 280–301 (FSMLTVYQCISMEGWTDVLYWV). The short motif at 290–293 (SMEG) is the Selectivity filter of repeat I element. Glu-292 serves as a coordination point for Ca(2+). The Extracellular segment spans residues 302 to 309 (NDAIGNEW). The chain crosses the membrane as a helical span at residues 310–330 (PWIYFVTLILLGSFFILNLVL). The Cytoplasmic portion of the chain corresponds to 331–432 (GVLSGEFTKE…WKCHDLVKSK (102 aa)). The tract at residues 357 to 374 (QQLEEDLRGYMSWITQGE) is binding to the beta subunit. Phosphoserine occurs at positions 393 and 397. The II repeat unit spans residues 418–664 (NRVFRWKCHD…VFLAIAVDNL (247 aa)). A helical transmembrane segment spans residues 433-451 (VFYWLVILIVALNTLSIAS). Topologically, residues 452 to 462 (EHHNQPLWLTH) are extracellular. The helical transmembrane segment at 463–483 (LQDVANRVLLTLFTIEMLMKM) threads the bilayer. Residues 484-494 (YGLGLRQYFMS) are Cytoplasmic-facing. The chain crosses the membrane as a helical span at residues 495–514 (IFNRFDCFVVCSGILEILLV). The Extracellular segment spans residues 515-523 (ESGAMSPLG). The helical transmembrane segment at 524 to 542 (ISVLRCIRLLRLFKITKYW) threads the bilayer. The Cytoplasmic portion of the chain corresponds to 543–561 (TSLSNLVASLLNSIRSIAS). The helical transmembrane segment at 562-581 (LLLLLFLFIIIFALLGMQLF) threads the bilayer. Residues 582 to 601 (GGRYDFEDTEVRRSNFDNFP) lie on the Extracellular side of the membrane. Positions 602 to 623 (QALISVFQVLTGEDWNSVMYNG) form an intramembrane region, pore-forming. A Selectivity filter of repeat II motif is present at residues 612–615 (TGED). Residue Glu-614 participates in Ca(2+) binding. Residues 624 to 633 (IMAYGGPTYP) lie on the Extracellular side of the membrane. The helical transmembrane segment at 634-653 (GVLVCIYFIILFVCGNYILL) threads the bilayer. Residues 654-799 (NVFLAIAVDN…VLCHRIVNAT (146 aa)) lie on the Cytoplasmic side of the membrane. Disordered regions lie at residues 675–712 (KAKA…SKGE) and 731–757 (EVKD…VSPR). Ser-687 bears the Phosphoserine; by PKA mark. Residues 690–711 (LPDKSEEERATVTKKLEQKSKG) show a composition bias toward basic and acidic residues. Residues 742-751 (PGDDEEDEPE) show a composition bias toward acidic residues. The III repeat unit spans residues 768-1068 (EKAVPIPEAS…IFVGFVIVTF (301 aa)). A helical membrane pass occupies residues 800–818 (WFTNFILLFILLSSAALAA). At 819–830 (EDPIRADSMRNQ) the chain is on the extracellular side. A helical transmembrane segment spans residues 831-850 (ILEYFDYVFTAVFTVEIVLK). Topologically, residues 851 to 866 (MTTYGAFLHKGSFCRN) are cytoplasmic. The chain crosses the membrane as a helical span at residues 867-885 (YFNILDLLVVAVSLISMGL). At 886–892 (ESSAISV) the chain is on the extracellular side. A helical transmembrane segment spans residues 893–911 (VKILRVLRVLRPLRAINRA). At 912–930 (KGLKHVVQCVFVAIRTIGN) the chain is on the cytoplasmic side. Residues 931–950 (IVLVTTLLQFMFACIGVQLF) form a helical membrane-spanning segment. The Extracellular segment spans residues 951-1000 (KGKFYSCNDLSKMTEEECRGYYYIYKDGDPTQIELRPRQWIHNDFHFDNV). Cys-957 and Cys-968 are oxidised to a cystine. Positions 988–1077 (RQWIHNDFHF…FQEQGETEYK (90 aa)) are dihydropyridine binding. The segment at residues 1001–1021 (LSAMMSLFTVSTFEGWPQLLY) is an intramembrane region (pore-forming). The Selectivity filter of repeat III signature appears at 1012-1015 (TFEG). Residue Glu-1014 participates in Ca(2+) binding. Topologically, residues 1022 to 1038 (KAIDSNEEDTGPVYNNR) are extracellular. A helical transmembrane segment spans residues 1039–1060 (VEMAIFFIIYIILIAFFMMNIF). The Cytoplasmic segment spans residues 1061–1118 (VGFVIVTFQEQGETEYKNCELDKNQRQCVQYALKARPLRCYIPKNPYQYQVWYVVTSS). An IV repeat occupies 1105-1384 (NPYQYQVWYV…LFVAVIMDNF (280 aa)). Residues 1119-1140 (YFEYLMFALIMLNTICLGMQHY) traverse the membrane as a helical segment. Asn-1141 carries an N-linked (GlcNAc...) asparagine glycan. Topologically, residues 1141 to 1148 (NQSEQMNH) are extracellular. A helical transmembrane segment spans residues 1149 to 1170 (ISDILNVAFTIIFTLEMVLKLI). Residues 1171-1180 (AFKPRGYFGD) are Cytoplasmic-facing. The helical transmembrane segment at 1181-1200 (PWNVFDFLIVIGSIIDVILS) threads the bilayer. Residues 1201–1231 (EIDTFLASSGGLYCLGGGCGNVDPDESARIS) are Extracellular-facing. The helical transmembrane segment at 1232-1250 (SAFFRLFRVMRLVKLLNRA) threads the bilayer. Topologically, residues 1251 to 1268 (EGVRTLLWTFIKSFQALP) are cytoplasmic. Residues 1269–1289 (YVALLIVMLFFIYAVIGMQMF) form a helical membrane-spanning segment. Residues 1290–1311 (GKIAMVDGTQINRNNNFQTFPQ) lie on the Extracellular side of the membrane. The segment at residues 1312–1330 (AVLLLFRCATGEAWQEILL) is an intramembrane region (pore-forming). The Selectivity filter of repeat IV motif lies at 1321-1324 (TGEA). Over 1331-1356 (ACSYGKLCDPESDYAPGEEHTCGTNF) the chain is Extracellular. Positions 1337 to 1403 (LCDPESDYAP…LGPHHLDEFK (67 aa)) are dihydropyridine binding. Cysteines 1338 and 1352 form a disulfide. Phenylalkylamine binding stretches follow at residues 1349-1391 (EHTC…TRDW) and 1349-1392 (EHTC…RDWS). Residues 1357–1381 (AYYYFISFYMLCAFLIINLFVAVIM) traverse the membrane as a helical segment. Topologically, residues 1382 to 1852 (DNFDYLTRDW…PEGGAVPWEP (471 aa)) are cytoplasmic. The segment at 1522–1542 (KFYATFLIQEHFRKFMKRQEE) is interaction with calmodulin. Ser-1575 bears the Phosphoserine; by PKA and CAMK2 mark. A Phosphothreonine modification is found at Thr-1579. Position 1617 is a phosphoserine; by PKA (Ser-1617). Disordered stretches follow at residues 1702 to 1721 (GPLS…HVDK) and 1727 to 1762 (TQRG…PTSR). Residues 1747–1757 (KAEHPVQKEGK) are compositionally biased toward basic and acidic residues.

Belongs to the calcium channel alpha-1 subunit (TC 1.A.1.11) family. CACNA1S subfamily. Component of a calcium channel complex consisting of a pore-forming alpha subunit (CACNA1S) and the ancillary subunits CACNB1 or CACNB2, CACNG1 and CACNA2D1. The channel complex contains alpha, beta, gamma and delta subunits in a 1:1:1:1 ratio, i.e. it contains either CACNB1 or CACNB2. CACNA1S channel activity is modulated by the auxiliary subunits (CACNB1 or CACNB2, CACNG1 and CACNA2D1). Interacts with DYSF and JSRP1. Interacts with RYR1. Interacts with STAC, STAC2 and STAC3 (via their SH3 domains). Interacts with CALM. In terms of processing, the alpha-1S subunit is found in two isoforms in the skeletal muscle: a minor form of 212 kDa containing the complete amino acid sequence, and a major form of 190 kDa derived from the full-length form by post-translational proteolysis close to Phe-1690. Phosphorylated. Phosphorylation by PKA activates the calcium channel. Both the minor and major forms are phosphorylated in vitro by PKA. Phosphorylation at Ser-1575 is involved in beta-adrenergic-mediated regulation of the channel.

It localises to the cell membrane. The protein localises to the sarcolemma. The protein resides in the T-tubule. It catalyses the reaction Ca(2+)(in) = Ca(2+)(out). With respect to regulation, channel activity is blocked by dihydropyridines (DHP), phenylalkylamines, and by benzothiazepines. Pore-forming, alpha-1S subunit of the voltage-gated calcium channel that gives rise to L-type calcium currents in skeletal muscle. Calcium channels containing the alpha-1S subunit play an important role in excitation-contraction coupling in skeletal muscle via their interaction with RYR1, which triggers Ca(2+) release from the sarcplasmic reticulum and ultimately results in muscle contraction. Long-lasting (L-type) calcium channels belong to the 'high-voltage activated' (HVA) group. The chain is Voltage-dependent L-type calcium channel subunit alpha-1S (Cacna1s) from Mus musculus (Mouse).